Reading from the N-terminus, the 879-residue chain is Alanine--tRNA ligase (879 aa).

Residues histidine 567, histidine 571, cysteine 669, and histidine 673 each coordinate Zn(2+).

It belongs to the class-II aminoacyl-tRNA synthetase family. The cofactor is Zn(2+).

The protein resides in the cytoplasm. It carries out the reaction tRNA(Ala) + L-alanine + ATP = L-alanyl-tRNA(Ala) + AMP + diphosphate. In terms of biological role, catalyzes the attachment of alanine to tRNA(Ala) in a two-step reaction: alanine is first activated by ATP to form Ala-AMP and then transferred to the acceptor end of tRNA(Ala). Also edits incorrectly charged Ser-tRNA(Ala) and Gly-tRNA(Ala) via its editing domain. The polypeptide is Alanine--tRNA ligase (Levilactobacillus brevis (strain ATCC 367 / BCRC 12310 / CIP 105137 / JCM 1170 / LMG 11437 / NCIMB 947 / NCTC 947) (Lactobacillus brevis)).